Here is a 1184-residue protein sequence, read N- to C-terminus: MRKKQKLPFDKLAIALMSTSILLNAQSDIKANTVTEDTPATEQAVETPQPTAVSEEAPSSKETKTPQTPDDAEETVADKANDLAPQAPAKTTDTPATSKATIRDLNDPSQVKTLQEKAGKGAGTVVAVIDAGFDKNHEAWRLTDKTKARYQSKEDLEKAKKEHGITYGEWVNDKIAYYHDYSKDGKTAVDQEHGTHVSGILSGNAPSETKEPYRLEGAMPEAQLLLMRVEIVNGLADYARNYAQAIRDAVNLGAKVINMSFGNAALAYANLPDETKKAFDYAKSKGVSIVTSAGNDSSFGGKTRLPLADHPDYGVVGTPAAADSTLTVASYSPDKQLTETATVKTADQQDKEMPVLSTNRFEPNKAYDYAYANRGMKEDDFKDVKGKIALIERGDIDFKDKIANAKKAGAVGVLIYDNQDKGFPIELPNVDQMPAAFISRKDGLLLKENPQKTITFNATPKVLPTASGTKLSRFSSWGLTADGNIKPDIAAPGQDILSSVANNKYAKLSGTSMSAPLVAGIMGLLQKQYETQYPDMTPSERLDLAKKVLMSSATALYDEDEKAYFSPRQQGAGAVDAKKASAATMYVTDKDNTSSKVHLNNVSDTFEVTVTVHNKSDKPQELYYQATVQTDKVDGKHFALAPKALYETSWQKITIPANSSKQVTVPIDASRFSKDLLAQMKNGYFLEGFVRFKQDLTKEELMSIPYIGFRGDFGNLSALEKPIYDSKDGSSYYHEANSDAKDQLDGDGLQFYALKNNFTALTTESNPWMIIKAVKEGVENIEDIESSEITETIFAGTFAKQDDDSHYYIHRHANGKPYAAISPNGDGNRDYVQFQGTFLRNAKNLVAEVLDKEGNVVWTSEVTEQVVKNYNNDLASTLGSTRFEKTRWDGKDKDGKVVANGTYTYRVRYTPISSGAKEQHTDFDVIVDNTTPEVATSATFSTEDRRLTLASKPKTSQPVYRERIAYTYMDEDLPTTEYISPNEDGTFTLPEEAETMEGGTVPLKMSDFTYVVEDMAGNITYTPVTKLLEGHSNKPEQDGSDQVPDKKPETKPEQDGSGQAPDKKPETKPEQDGSGQAPDKKPEAKPEQDGSGQTPDKKPETKPEKDSSGQTPGKTPQKGQPSRTLEKRSSKRALATKASARDQLPTTNDKDTNRLHLLKLVMTTFFFGLVAHIFKTKRQKETKK.

The signal sequence occupies residues 1-31 (MRKKQKLPFDKLAIALMSTSILLNAQSDIKA). 2 stretches are compositionally biased toward polar residues: residues 33 to 52 (TVTE…QPTA) and 89 to 100 (AKTTDTPATSKA). The interval 33–117 (TVTEDTPATE…PSQVKTLQEK (85 aa)) is disordered. The 483-residue stretch at 99–581 (KATIRDLNDP…AGAVDAKKAS (483 aa)) folds into the Peptidase S8 domain. Catalysis depends on charge relay system residues D130, H193, and S512. Basic and acidic residues-rich tracts occupy residues 1029 to 1054 (EGHS…KPEQ), 1061 to 1071 (PDKKPETKPEQ), 1078 to 1088 (PDKKPEAKPEQ), and 1095 to 1107 (PDKK…EKDS). The interval 1029–1150 (EGHSNKPEQD…RDQLPTTNDK (122 aa)) is disordered. 4 tandem repeats follow at residues 1034 to 1067 (KPEQ…KPET), 1068 to 1084 (KPEQ…KPEA), 1085 to 1101 (KPEQ…KPET), and 1102 to 1118 (KPEK…TPQK). Positions 1034–1118 (KPEQDGSDQV…GQTPGKTPQK (85 aa)) are 4 X 17 AA tandem repeats. Polar residues predominate over residues 1109 to 1123 (GQTPGKTPQKGQPSR). The LPXTG sorting signal motif lies at 1144–1148 (LPTTN). T1147 carries the pentaglycyl murein peptidoglycan amidated threonine modification. A propeptide spans 1148 to 1184 (NDKDTNRLHLLKLVMTTFFFGLVAHIFKTKRQKETKK) (removed by sortase).

It belongs to the peptidase S8 family. Post-translationally, cleaved by SpeB protease; leading to its degradation. Degradation by SpeB is probably strictly regulated to preserve integrity of C5a peptidase.

The protein localises to the secreted. Its subcellular location is the cell wall. The catalysed reaction is The primary cleavage site is at 67-His-|-Lys-68 in human C5a with a minor secondary cleavage site at 58-Ala-|-Ser-59.. This virulence factor of S.pyogenes specifically cleaves the human serum chemotaxin C5a at '68-Lys-|-Asp-69' bond near its C-terminus, destroying its ability to serve as a chemoattractant. The protein is C5a peptidase (scpA) of Streptococcus pyogenes serotype M6 (strain ATCC BAA-946 / MGAS10394).